The primary structure comprises 402 residues: Acetylornithine aminotransferase (402 aa).

Pyridoxal 5'-phosphate contacts are provided by residues G117–A118 and F143. Residue R146 participates in N(2)-acetyl-L-ornithine binding. D231 to Q234 is a pyridoxal 5'-phosphate binding site. An N6-(pyridoxal phosphate)lysine modification is found at K260. Residue T288 coordinates N(2)-acetyl-L-ornithine. T289 serves as a coordination point for pyridoxal 5'-phosphate.

Belongs to the class-III pyridoxal-phosphate-dependent aminotransferase family. ArgD subfamily. As to quaternary structure, homodimer. Requires pyridoxal 5'-phosphate as cofactor.

It localises to the cytoplasm. It catalyses the reaction N(2)-acetyl-L-ornithine + 2-oxoglutarate = N-acetyl-L-glutamate 5-semialdehyde + L-glutamate. It participates in amino-acid biosynthesis; L-arginine biosynthesis; N(2)-acetyl-L-ornithine from L-glutamate: step 4/4. The polypeptide is Acetylornithine aminotransferase (Corynebacterium efficiens (strain DSM 44549 / YS-314 / AJ 12310 / JCM 11189 / NBRC 100395)).